The following is a 697-amino-acid chain: CENP-A multicopy suppressor protein 2 (697 aa).

The GATA-type; atypical zinc finger occupies 351–378; that stretch reads CQNCGTIKTANWRNATYMNITLMLCNAC. The tract at residues 443–484 is disordered; that stretch reads PLNRLTSLDSTHSAPDPNHISKPSVVNQQKSRGGPRTAKLKN. Positions 445 to 455 are enriched in polar residues; the sequence is NRLTSLDSTHS.

Interacts with CENP-A.

It is found in the nucleus. Its subcellular location is the chromosome. It localises to the centromere. Functionally, required for proper chromosome segregation via regulation of CENP-A localization to the centromere. The chain is CENP-A multicopy suppressor protein 2 (ams2) from Schizosaccharomyces pombe (strain 972 / ATCC 24843) (Fission yeast).